A 118-amino-acid chain; its full sequence is Large ribosomal subunit protein bL20 (118 aa).

It belongs to the bacterial ribosomal protein bL20 family.

In terms of biological role, binds directly to 23S ribosomal RNA and is necessary for the in vitro assembly process of the 50S ribosomal subunit. It is not involved in the protein synthesizing functions of that subunit. In Pectobacterium atrosepticum (strain SCRI 1043 / ATCC BAA-672) (Erwinia carotovora subsp. atroseptica), this protein is Large ribosomal subunit protein bL20.